The chain runs to 235 residues: Secretory carrier-associated membrane protein 5A (235 aa).

Over 1–39 (MSDKPNNFPPLPRFIPLKPCFYQDFDTDIPDLHRTTAKR) the chain is Cytoplasmic. Residues 40–60 (LYYLWMLNSITLGVNLIGCLA) traverse the membrane as a helical segment. Residues 61–67 (WLIGGGS) are Extracellular-facing. A helical transmembrane segment spans residues 68 to 88 (ATNFGLAFLWLILFTPCSYVC). The Cytoplasmic segment spans residues 89-102 (WFRPIYKAFKTDSS). Residues 103-125 (FNFMAFFFTFTAQLVISIIQAVG) traverse the membrane as a helical segment. Over 126–148 (IPGWGVCGWIASISFFGTNVGSA) the chain is Extracellular. Residues 149–169 (VVMLIPTIMFTAVAVLSFVAL) traverse the membrane as a helical segment. Over 170 to 235 (TKVHRFYRGA…TPNYGYSNEM (66 aa)) the chain is Cytoplasmic.

This sequence belongs to the SCAMP family. SCAMP5 subfamily.

The protein localises to the cell membrane. It is found in the golgi apparatus membrane. It localises to the golgi apparatus. Its subcellular location is the trans-Golgi network membrane. The protein resides in the recycling endosome membrane. The protein localises to the cytoplasmic vesicle. It is found in the secretory vesicle. It localises to the synaptic vesicle membrane. Functionally, required for the calcium-dependent exocytosis of signal sequence-containing cytokines. Probably acts in cooperation with the SNARE machinery. This Xenopus laevis (African clawed frog) protein is Secretory carrier-associated membrane protein 5A (scamp5-a).